Consider the following 343-residue polypeptide: Dihydroorotase (343 aa).

Zn(2+) contacts are provided by His13 and His15. Substrate is bound by residues 15–17 (HLR) and Asn41. The Zn(2+) site is built by Lys99, His136, and His174. Lys99 bears the N6-carboxylysine mark. His136 provides a ligand contact to substrate. Leu219 is a substrate binding site. Zn(2+) is bound at residue Asp247. The active site involves Asp247. The substrate site is built by His251 and Ala263.

This sequence belongs to the metallo-dependent hydrolases superfamily. DHOase family. Class II DHOase subfamily. As to quaternary structure, homodimer. The cofactor is Zn(2+).

It catalyses the reaction (S)-dihydroorotate + H2O = N-carbamoyl-L-aspartate + H(+). It participates in pyrimidine metabolism; UMP biosynthesis via de novo pathway; (S)-dihydroorotate from bicarbonate: step 3/3. Its function is as follows. Catalyzes the reversible cyclization of carbamoyl aspartate to dihydroorotate. In Alkalilimnicola ehrlichii (strain ATCC BAA-1101 / DSM 17681 / MLHE-1), this protein is Dihydroorotase.